Consider the following 613-residue polypeptide: Metacaspase-1 (613 aa).

Residues H404 and C460 contribute to the active site.

The protein belongs to the peptidase C14B family. Monomer.

With respect to regulation, activated by Ca(2+). Functionally, cysteine protease that cleaves specifically after arginine or lysine residues. May play a role in apoptosis. The polypeptide is Metacaspase-1 (Plasmodium falciparum (isolate 3D7)).